The chain runs to 1458 residues: Probable serine/threonine-protein kinase yakA (1458 aa).

Over residues Asn-32 to Asn-76 the composition is skewed to low complexity. The interval Asn-32 to Asn-83 is disordered. In terms of domain architecture, Protein kinase spans Tyr-205 to Ile-548. Residues Leu-211–Val-219 and Lys-234 each bind ATP. The Proton acceptor role is filled by Asp-332. 2 disordered regions span residues His-441–Pro-462 and His-545–Gln-571. Low complexity predominate over residues Ser-446–Asn-459. Positions Asn-588–Ser-643 form a coiled coil. 4 stretches are compositionally biased toward low complexity: residues Thr-659 to Phe-709, Ser-791 to Ser-800, Gln-808 to Asn-853, and Asp-861 to Ser-870. Disordered stretches follow at residues Thr-659 to Phe-714 and Ser-791 to Asp-874. Positions Asn-878–Leu-927 form a coiled coil. Disordered stretches follow at residues Glu-930–Ile-1095, Asn-1128–Ile-1161, Asp-1233–Tyr-1347, Gln-1375–Ser-1399, and Gln-1435–Thr-1458. 3 stretches are compositionally biased toward low complexity: residues Gln-961 to Gln-988, Gln-1016 to Gln-1042, and Gln-1064 to Gln-1093. Polar residues-rich tracts occupy residues Asn-1128 to Gly-1158 and Asp-1233 to Pro-1245. 2 stretches are compositionally biased toward low complexity: residues Ser-1246–Tyr-1255 and Asn-1264–Asn-1279. The segment covering Ser-1280–Phe-1291 has biased composition (polar residues). The span at Pro-1292–Ser-1309 shows a compositional bias: low complexity. Composition is skewed to polar residues over residues Gly-1310–Gly-1321 and Gln-1331–Ser-1344. 2 coiled-coil regions span residues Gln-1346–Thr-1383 and Arg-1409–Ala-1442.

It belongs to the protein kinase superfamily. CMGC Ser/Thr protein kinase family. MNB/DYRK subfamily.

The protein resides in the cytoplasm. It catalyses the reaction L-seryl-[protein] + ATP = O-phospho-L-seryl-[protein] + ADP + H(+). The enzyme catalyses L-threonyl-[protein] + ATP = O-phospho-L-threonyl-[protein] + ADP + H(+). The catalysed reaction is L-tyrosyl-[protein] + ATP = O-phospho-L-tyrosyl-[protein] + ADP + H(+). Its function is as follows. General sensor of environmental conditions, such as heat stress, effecting changes through pkaC. Essential for survival to nitrosoative and oxidative stresses. Required for cell cycle control, not only at the onset but also during development (aggregation process and postaggregative development). The chain is Probable serine/threonine-protein kinase yakA (yakA) from Dictyostelium discoideum (Social amoeba).